Reading from the N-terminus, the 611-residue chain is Serine/arginine repetitive matrix protein 4 (611 aa).

Disordered regions lie at residues 38 to 248 (ARKP…PLQM) and 263 to 611 (SAAD…STRR). Basic residues-rich tracts occupy residues 107–123 (RGKK…RRRS) and 131–189 (VKKK…HRCP). Over residues 190-202 (SRSQSSESRPSSC) the composition is skewed to low complexity. Positions 203-216 (ESRHRGRSPEEGQK) are enriched in basic and acidic residues. Positions 217–226 (SRRRHSRRCS) are enriched in basic residues. Residues 270-290 (KTASPLTTSRGRSQEYDSGND) are compositionally biased toward polar residues. Residues 291–301 (TSSPPSTQTSS) show a composition bias toward low complexity. Positions 322-341 (LNSGNTSDSGNSFTTSSPQN) are enriched in polar residues. 2 stretches are compositionally biased toward low complexity: residues 390–422 (SRSS…SRST) and 430–461 (SRSP…SRYS). The segment covering 462–482 (PSRERDPKYSEKDSQQRERER) has biased composition (basic and acidic residues). Basic residues predominate over residues 483–498 (ARRRRRSYSPMRKRRR). Residues 499 to 508 (DSPSHLEARR) are compositionally biased toward basic and acidic residues. The span at 522 to 549 (PSPSSSGSLSSTSSWYSSSSSRSASRSY) shows a compositional bias: low complexity. Positions 550 to 564 (SRSRSRSRSRRRSRT) are enriched in basic residues. Positions 565-580 (RTSSSSSSRSPSPGSR) are enriched in low complexity. Over residues 581 to 595 (SRSRSRSRSRSRSRS) the composition is skewed to basic residues. The span at 596–611 (QSRSYSSADSYSSTRR) shows a compositional bias: low complexity.

The protein belongs to the nSR100 family. In terms of processing, phosphorylated. Specifically expressed in neuronal cells (at protein level). Expressed in the cerebellum.

It localises to the nucleus. Splicing factor specifically required for neural cell differentiation. Acts in conjunction with nPTB/PTBP2 by binding directly to its regulated target transcripts and promotes neural-specific exon inclusion in many genes that function in neural cell differentiation. Required to promote the inclusion of neural-specific exon 10 in nPTB/PTBP2, leading to increased expression of neural-specific nPTB/PTBP2. Also promotes the inclusion of exon 16 in DAAM1 in neuron extracts. Promotes alternative splicing of REST transcripts to produce REST isoform 3 (REST4) with greatly reduced repressive activity, thereby activating expression of REST targets in neural cells. Plays an important role during embryonic development as well as in the proper functioning of the adult nervous system. Regulates alternative splicing events in genes with important neuronal functions. This chain is Serine/arginine repetitive matrix protein 4 (SRRM4), found in Homo sapiens (Human).